Consider the following 132-residue polypeptide: Small ribosomal subunit protein eS12 (132 aa).

This sequence belongs to the eukaryotic ribosomal protein eS12 family.

This chain is Small ribosomal subunit protein eS12 (rps12), found in Oreochromis niloticus (Nile tilapia).